A 261-amino-acid polypeptide reads, in one-letter code: Succinate dehydrogenase iron-sulfur subunit (261 aa).

The tract at residues 1-23 (MAELRLPPNSVVKKGKEHKEQEE) is disordered. The 2Fe-2S ferredoxin-type domain maps to 28–119 (RKVKIYRYDP…DIKIYPLPHM (92 aa)). Cysteine 80, cysteine 85, and cysteine 100 together coordinate [2Fe-2S] cluster. A 4Fe-4S ferredoxin-type domain is found at 161–191 (GREKLDGLYECILCACCSTSCPSYWWNGDKY). Residues cysteine 171, cysteine 174, and cysteine 177 each coordinate [4Fe-4S] cluster. Cysteine 181 is a [3Fe-4S] cluster binding site. Tryptophan 186 is an a ubiquinone binding site. [3Fe-4S] cluster contacts are provided by cysteine 228 and cysteine 234. Cysteine 238 contacts [4Fe-4S] cluster.

Belongs to the succinate dehydrogenase/fumarate reductase iron-sulfur protein family. As to quaternary structure, part of an enzyme complex containing four subunits: a flavoprotein, an iron-sulfur, cytochrome b-556, and a hydrophobic anchor protein. It depends on [2Fe-2S] cluster as a cofactor. [3Fe-4S] cluster serves as cofactor. [4Fe-4S] cluster is required as a cofactor.

The catalysed reaction is a quinone + succinate = fumarate + a quinol. It participates in carbohydrate metabolism; tricarboxylic acid cycle; fumarate from succinate (bacterial route): step 1/1. The polypeptide is Succinate dehydrogenase iron-sulfur subunit (sdhB) (Rickettsia felis (strain ATCC VR-1525 / URRWXCal2) (Rickettsia azadi)).